We begin with the raw amino-acid sequence, 123 residues long: Immunoglobulin lambda variable 5-45 (123 aa).

An N-terminal signal peptide occupies residues 1–19; sequence MAWTPLLLLFLSHCTGSLS. Positions 20–44 are framework-1; sequence QAVLTQPSSLSASPGASASLTCTLC. The Ig-like domain occupies 20 to 123; sequence QAVLTQPSSL…YCMIWHSSAS (104 aa). Cysteines 41 and 115 form a disulfide. The interval 45 to 53 is complementarity-determining-1; the sequence is SGINVGTYR. The tract at residues 54 to 70 is framework-2; that stretch reads IYWYQQKPGSPPQYLLR. The interval 68-92 is disordered; the sequence is LLRYKSDSDKQQGSGVPSRFSGSKD. The complementarity-determining-2 stretch occupies residues 71 to 77; the sequence is YKSDSDK. Residues 78 to 92 are compositionally biased toward polar residues; sequence QQGSGVPSRFSGSKD. Residues 78 to 115 form a framework-3 region; that stretch reads QQGSGVPSRFSGSKDASANAGILLISGLQSEDEADYYC. Residues 116–123 are complementarity-determining-3; that stretch reads MIWHSSAS.

Immunoglobulins are composed of two identical heavy chains and two identical light chains; disulfide-linked.

The protein localises to the secreted. Its subcellular location is the cell membrane. Functionally, v region of the variable domain of immunoglobulin light chains that participates in the antigen recognition. Immunoglobulins, also known as antibodies, are membrane-bound or secreted glycoproteins produced by B lymphocytes. In the recognition phase of humoral immunity, the membrane-bound immunoglobulins serve as receptors which, upon binding of a specific antigen, trigger the clonal expansion and differentiation of B lymphocytes into immunoglobulins-secreting plasma cells. Secreted immunoglobulins mediate the effector phase of humoral immunity, which results in the elimination of bound antigens. The antigen binding site is formed by the variable domain of one heavy chain, together with that of its associated light chain. Thus, each immunoglobulin has two antigen binding sites with remarkable affinity for a particular antigen. The variable domains are assembled by a process called V-(D)-J rearrangement and can then be subjected to somatic hypermutations which, after exposure to antigen and selection, allow affinity maturation for a particular antigen. The protein is Immunoglobulin lambda variable 5-45 of Homo sapiens (Human).